The primary structure comprises 334 residues: N-acetyl-gamma-glutamyl-phosphate reductase (334 aa).

Residue C154 is part of the active site.

The protein belongs to the NAGSA dehydrogenase family. Type 1 subfamily.

It localises to the cytoplasm. It catalyses the reaction N-acetyl-L-glutamate 5-semialdehyde + phosphate + NADP(+) = N-acetyl-L-glutamyl 5-phosphate + NADPH + H(+). It functions in the pathway amino-acid biosynthesis; L-arginine biosynthesis; N(2)-acetyl-L-ornithine from L-glutamate: step 3/4. Functionally, catalyzes the NADPH-dependent reduction of N-acetyl-5-glutamyl phosphate to yield N-acetyl-L-glutamate 5-semialdehyde. The polypeptide is N-acetyl-gamma-glutamyl-phosphate reductase (Pectobacterium carotovorum subsp. carotovorum (strain PC1)).